The sequence spans 196 residues: Probable thymidylate kinase (196 aa).

7–14 provides a ligand contact to ATP; it reads GIDGSGKS.

It belongs to the thymidylate kinase family.

It catalyses the reaction dTMP + ATP = dTDP + ADP. This chain is Probable thymidylate kinase, found in Natronomonas pharaonis (strain ATCC 35678 / DSM 2160 / CIP 103997 / JCM 8858 / NBRC 14720 / NCIMB 2260 / Gabara) (Halobacterium pharaonis).